We begin with the raw amino-acid sequence, 529 residues long: Phenylalanine N-monooxygenase (529 aa).

The helical transmembrane segment at Met-1–Met-21 threads the bilayer. Cys-467 is a heme binding site.

Belongs to the cytochrome P450 family. The cofactor is heme.

Its subcellular location is the endoplasmic reticulum membrane. The catalysed reaction is L-phenylalanine + 2 reduced [NADPH--hemoprotein reductase] + 2 O2 = (E)-phenylacetaldehyde oxime + 2 oxidized [NADPH--hemoprotein reductase] + CO2 + 3 H2O + 2 H(+). It functions in the pathway secondary metabolite biosynthesis; phenylglucosinolate biosynthesis. In terms of biological role, converts L-phenylalanine into phenylacetaldoxime, the precursor of benzylglucosinolate (glucotropeolin). The protein is Phenylalanine N-monooxygenase (CYP79A2) of Arabidopsis thaliana (Mouse-ear cress).